The sequence spans 874 residues: Alanine--tRNA ligase (874 aa).

His-562, His-566, Cys-664, and His-668 together coordinate Zn(2+).

Belongs to the class-II aminoacyl-tRNA synthetase family. Zn(2+) serves as cofactor.

It localises to the cytoplasm. It catalyses the reaction tRNA(Ala) + L-alanine + ATP = L-alanyl-tRNA(Ala) + AMP + diphosphate. Catalyzes the attachment of alanine to tRNA(Ala) in a two-step reaction: alanine is first activated by ATP to form Ala-AMP and then transferred to the acceptor end of tRNA(Ala). Also edits incorrectly charged Ser-tRNA(Ala) and Gly-tRNA(Ala) via its editing domain. The sequence is that of Alanine--tRNA ligase from Shewanella woodyi (strain ATCC 51908 / MS32).